The sequence spans 444 residues: Probable polygalacturonase At1g80170 (444 aa).

The N-terminal stretch at 1-28 (MSYSRGGTLVTLLLLLVVASSLALTANA) is a signal peptide. PbH1 repeat units follow at residues 208 to 234 (CRRV…HISV), 235 to 256 (SRGI…SIVK), 258 to 278 (STQI…SIGS), 288 to 309 (VRDI…RIKT), 317 to 338 (VSKI…IIDQ), and 351 to 378 (TSAI…KISC). The active-site Proton donor is D249. The active site involves H272.

The protein belongs to the glycosyl hydrolase 28 family. In terms of tissue distribution, expressed in young, mature and dehiscing anthers. Found in stems, but not in roots or in abscission zone of floral organs.

Its subcellular location is the secreted. The protein resides in the cell wall. The catalysed reaction is (1,4-alpha-D-galacturonosyl)n+m + H2O = (1,4-alpha-D-galacturonosyl)n + (1,4-alpha-D-galacturonosyl)m.. The polypeptide is Probable polygalacturonase At1g80170 (Arabidopsis thaliana (Mouse-ear cress)).